A 259-amino-acid chain; its full sequence is Deoxyribose-phosphate aldolase (259 aa).

Residue Asp102 is the Proton donor/acceptor of the active site. The active-site Schiff-base intermediate with acetaldehyde is the Lys167. Lys201 acts as the Proton donor/acceptor in catalysis.

Belongs to the DeoC/FbaB aldolase family. DeoC type 2 subfamily.

It is found in the cytoplasm. The enzyme catalyses 2-deoxy-D-ribose 5-phosphate = D-glyceraldehyde 3-phosphate + acetaldehyde. It functions in the pathway carbohydrate degradation; 2-deoxy-D-ribose 1-phosphate degradation; D-glyceraldehyde 3-phosphate and acetaldehyde from 2-deoxy-alpha-D-ribose 1-phosphate: step 2/2. Its function is as follows. Catalyzes a reversible aldol reaction between acetaldehyde and D-glyceraldehyde 3-phosphate to generate 2-deoxy-D-ribose 5-phosphate. The sequence is that of Deoxyribose-phosphate aldolase from Escherichia coli O8 (strain IAI1).